The following is a 238-amino-acid chain: HTH-type transcriptional regulator TreR (238 aa).

The HTH gntR-type domain occupies 1–71; sequence MKVNKFITIY…RGKGSVVLNR (71 aa). The H-T-H motif DNA-binding region spans 31–50; it reads EHELTAQYGTSRETVRKALH.

Dimer of dimers.

Repressor for the trePA operon. It is able to bind trehalose-6-phosphate. This Bacillus subtilis (strain 168) protein is HTH-type transcriptional regulator TreR (treR).